Here is a 428-residue protein sequence, read N- to C-terminus: MITGVFSMRLWTPVGVLTSLAYCLHQRRVALAELQEADGRRPVDRSLLKSKMVQVVFRHGARSPRKPLPLEEQVEWNPQLLEVPPQTQFDYTVTNLAGGPKPYSPYDAQYCETTLKGGMFAGQLTKVGMQQMFALGERLRKNYVEDIPFLSPTFSPQEVFIRSTNIFRNLESTRCLLAGLFQCQKEGPIIIHTDEADSEVLYPNYQSCWSLRQRTRGRRQTASLQPGISEDLKKVKDRMGIDSSDKVDFFILLDNMAAEQAHNLPSCPMLKRFAQMIEQRAVDTSLYILPKEDRESLQMAVGPLLHILESNLLKAMDSATAPDKIRKLYLYAAHDVTLIPLLMTLGIFDHKWPPFAVDLTMELYQHLESKEWFVQLYYHGKEQVPRGCPDGLCPLDMFLNAMSVYTLSPEKYHALCSQTQVMEVGNGE.

A mitochondrion-targeting transit peptide spans 1–32 (MITGVFSMRLWTPVGVLTSLAYCLHQRRVALA). The segment at 58–168 (RHGARSPRKP…VFIRSTNIFR (111 aa)) is substrate binding. His-59 (nucleophile) is an active-site residue. Residue Asp-335 is the Proton donor of the active site.

The protein belongs to the histidine acid phosphatase family. Monomer.

It is found in the mitochondrion. The enzyme catalyses a phosphate monoester + H2O = an alcohol + phosphate. It catalyses the reaction 1-(9Z-octadecenoyl)-sn-glycero-3-phosphate + H2O = 1-(9Z-octadecenoyl)-sn-glycerol + phosphate. In terms of biological role, hydrolyzes lysophosphatidic acid (LPA) containing a medium length fatty acid chain to the corresponding monoacylglycerol. Has highest activity with lysophosphatidic acid containing myristate (C14:0), monounsaturated oleate (C18:1) or palmitate (C16:0), and lower activity with C18:0 and C6:0 lysophosphatidic acid. The chain is Lysophosphatidic acid phosphatase type 6 (ACP6) from Pongo abelii (Sumatran orangutan).